A 432-amino-acid polypeptide reads, in one-letter code: Ornithine decarboxylase, chloroplastic (432 aa).

Residue lysine 95 is modified to N6-(pyridoxal phosphate)lysine. Residues serine 227, glycine 265, and 298-301 (EPGR) contribute to the pyridoxal 5'-phosphate site. Substrate is bound at residue 341–342 (YD). Residue cysteine 377 is the Proton donor; shared with dimeric partner of the active site. Substrate is bound at residue aspartate 378. Position 406 (tyrosine 406) interacts with pyridoxal 5'-phosphate.

The protein belongs to the Orn/Lys/Arg decarboxylase class-II family. As to quaternary structure, homodimer. Only the dimer is catalytically active, as the active sites are constructed of residues from both monomers. Pyridoxal 5'-phosphate serves as cofactor.

It localises to the plastid. It is found in the chloroplast. It carries out the reaction L-lysine + H(+) = cadaverine + CO2. The enzyme catalyses L-ornithine + H(+) = putrescine + CO2. It functions in the pathway alkaloid biosynthesis; nicotine biosynthesis. Its pathway is amine and polyamine biosynthesis; putrescine biosynthesis via L-ornithine pathway; putrescine from L-ornithine: step 1/1. Its activity is regulated as follows. Repressed by alpha-difluoromethylornithine (DFMO), 5,5'-dithiobis-(2-nitrobenzoic acid) (DTNB) and salicylaldehyde. Involved in the biosynthesis of pyridine alkaloid natural products, leading mainly to the production of anabasine, anatabine, nicotine and nornicotine, effective deterrents against herbivores with antiparasitic and pesticide properties (neurotoxins); nornicotine serves as the precursor in the synthesis of the carcinogen compound N'-nitrosonornicotine (NNN). Catalyzes the first and rate-limiting step of polyamine biosynthesis that converts ornithine into putrescine, which is the precursor for the polyamines, spermidine and spermine. Can also use, with a lower efficiency, L-lysine as substrate to produce cadaverine. Polyamines are essential for cell proliferation and are implicated in cellular processes, ranging from DNA replication to apoptosis. This is Ornithine decarboxylase, chloroplastic from Nicotiana glutinosa (Tobacco).